The chain runs to 206 residues: Musculin (206 aa).

The interval 1-115 (MSTGSVSDPE…QSQRNAANAR (115 aa)) is disordered. The span at 46 to 56 (SAEEEDPDGEE) shows a compositional bias: acidic residues. Positions 71–76 (KRKRPR) match the Nuclear localization signal motif. Positions 78–92 (AGGGGAGGSAGGGGK) are enriched in gly residues. A compositionally biased stretch (low complexity) spans 93–102 (KPLPAKGSAA). The bHLH domain occupies 107–159 (SQRNAANARERARMRVLSKAFSRLKTSLPWVPPDTKLSKLDTLRLASSYIAHL).

Efficient DNA binding requires dimerization with another bHLH protein. Binds DNA as a homodimer or a heterodimer. Forms a heterodimer with TCF3. Expressed in lymphoid tissues, B-cell lines and activated B-cells.

It localises to the nucleus. In terms of biological role, transcription repressor capable of inhibiting the transactivation capability of TCF3/E47. May play a role in regulating antigen-dependent B-cell differentiation. The protein is Musculin (MSC) of Homo sapiens (Human).